A 344-amino-acid chain; its full sequence is L-rhamnose-proton symporter (344 aa).

The next 10 helical transmembrane spans lie at 4 to 24 (AITM…CFYA), 38 to 58 (WSVG…ALLL), 68 to 88 (FNLS…IGNI), 101 to 121 (MGIG…TPII), 137 to 157 (TLLG…AGQL), 175 to 195 (LLLA…MNAA), 214 to 234 (LPSY…FCFI), 259 to 279 (ILLS…YAWG), 290 to 310 (MSWM…GLVL), and 321 to 341 (VAVL…VGLG).

It belongs to the L-rhamnose transporter (TC 2.A.7.6) family.

It localises to the cell inner membrane. The enzyme catalyses L-rhamnopyranose(in) + H(+)(in) = L-rhamnopyranose(out) + H(+)(out). Uptake of L-rhamnose across the cytoplasmic membrane with the concomitant transport of protons into the cell (symport system). This Salmonella dublin (strain CT_02021853) protein is L-rhamnose-proton symporter.